Here is a 580-residue protein sequence, read N- to C-terminus: Isocitrate lyase (580 aa).

A substrate-binding site is contributed by serine 106–tryptophan 108. Residue aspartate 177 participates in Mg(2+) binding. Catalysis depends on cysteine 215, which acts as the Proton acceptor. Substrate contacts are provided by residues glycine 216–histidine 217, arginine 252, asparagine 441–serine 445, and threonine 476. Positions serine 578–methionine 580 match the Microbody targeting signal motif.

It belongs to the isocitrate lyase/PEP mutase superfamily. Isocitrate lyase family. In terms of assembly, homotetramer. Mg(2+) serves as cofactor.

Its subcellular location is the glyoxysome. It catalyses the reaction D-threo-isocitrate = glyoxylate + succinate. The protein operates within carbohydrate metabolism; glyoxylate cycle; (S)-malate from isocitrate: step 1/2. Its function is as follows. Involved in storage lipid mobilization during the growth of higher plant seedling. This Pinus taeda (Loblolly pine) protein is Isocitrate lyase (ICL 8).